Reading from the N-terminus, the 215-residue chain is MOB kinase activator-like 1B (215 aa).

The interval 1-29 (MSLFGLGSRNQKTFRPKKSAPTGSKGAQL) is disordered. Positions 80, 85, 162, and 167 each coordinate Zn(2+).

This sequence belongs to the MOB1/phocein family. Constitutively expressed with higher expression in roots, flowers and pods than in leaves and stems.

Its subcellular location is the cytoplasm. The protein localises to the cytoskeleton. It is found in the phragmoplast. The protein is MOB kinase activator-like 1B of Medicago sativa subsp. falcata (Sickle medic).